The following is a 273-amino-acid chain: Eukaryotic translation initiation factor 3 subunit J (273 aa).

The segment at 1–158 (MPTKKWEDEE…DPSDPSKTVE (158 aa)) is disordered. Positions 34 to 54 (DEEANDSDVLDSWDAAEDSEV) are enriched in acidic residues. The stretch at 50–97 (EDSEVEREKAKKAAEAKAKAEAEAKANKKTKAARINEHKQRRKEAEES) forms a coiled coil. The span at 55–75 (EREKAKKAAEAKAKAEAEAKA) shows a compositional bias: basic and acidic residues. A compositionally biased stretch (acidic residues) spans 95-104 (EESDESDDET). The span at 105–126 (ESQRRERLRRTEKEADLAHAED) shows a compositional bias: basic and acidic residues.

Belongs to the eIF-3 subunit J family. Component of the eukaryotic translation initiation factor 3 (eIF-3) complex.

Its subcellular location is the cytoplasm. In terms of biological role, component of the eukaryotic translation initiation factor 3 (eIF-3) complex, which is involved in protein synthesis of a specialized repertoire of mRNAs and, together with other initiation factors, stimulates binding of mRNA and methionyl-tRNAi to the 40S ribosome. The eIF-3 complex specifically targets and initiates translation of a subset of mRNAs involved in cell proliferation. The protein is Eukaryotic translation initiation factor 3 subunit J of Pyricularia oryzae (strain 70-15 / ATCC MYA-4617 / FGSC 8958) (Rice blast fungus).